A 211-amino-acid polypeptide reads, in one-letter code: Probable nicotinate-nucleotide adenylyltransferase (211 aa).

This sequence belongs to the NadD family.

It catalyses the reaction nicotinate beta-D-ribonucleotide + ATP + H(+) = deamido-NAD(+) + diphosphate. It functions in the pathway cofactor biosynthesis; NAD(+) biosynthesis; deamido-NAD(+) from nicotinate D-ribonucleotide: step 1/1. Catalyzes the reversible adenylation of nicotinate mononucleotide (NaMN) to nicotinic acid adenine dinucleotide (NaAD). In Shewanella frigidimarina (strain NCIMB 400), this protein is Probable nicotinate-nucleotide adenylyltransferase.